Consider the following 361-residue polypeptide: Peptide chain release factor 1 (361 aa).

Glutamine 237 is subject to N5-methylglutamine. Basic and acidic residues predominate over residues 285 to 296 (DEKRRSAEESTR). The disordered stretch occupies residues 285-305 (DEKRRSAEESTRRNLVGSGDR).

It belongs to the prokaryotic/mitochondrial release factor family. Methylated by PrmC. Methylation increases the termination efficiency of RF1.

The protein localises to the cytoplasm. Its function is as follows. Peptide chain release factor 1 directs the termination of translation in response to the peptide chain termination codons UAG and UAA. This Shewanella sediminis (strain HAW-EB3) protein is Peptide chain release factor 1.